Here is a 387-residue protein sequence, read N- to C-terminus: Succinate--CoA ligase [ADP-forming] subunit beta (387 aa).

The 237-residue stretch at 9 to 245 folds into the ATP-grasp domain; sequence KDLLESYGLK…KSQENAKELK (237 aa). ATP contacts are provided by residues K46, 53 to 55, E100, Y103, and E108; that span reads GRG. Residues N200 and D214 each contribute to the Mg(2+) site. Residues N265 and 322–324 contribute to the substrate site; that span reads GIV.

This sequence belongs to the succinate/malate CoA ligase beta subunit family. In terms of assembly, heterotetramer of two alpha and two beta subunits. The cofactor is Mg(2+).

The catalysed reaction is succinate + ATP + CoA = succinyl-CoA + ADP + phosphate. It catalyses the reaction GTP + succinate + CoA = succinyl-CoA + GDP + phosphate. It participates in carbohydrate metabolism; tricarboxylic acid cycle; succinate from succinyl-CoA (ligase route): step 1/1. Succinyl-CoA synthetase functions in the citric acid cycle (TCA), coupling the hydrolysis of succinyl-CoA to the synthesis of either ATP or GTP and thus represents the only step of substrate-level phosphorylation in the TCA. The beta subunit provides nucleotide specificity of the enzyme and binds the substrate succinate, while the binding sites for coenzyme A and phosphate are found in the alpha subunit. This is Succinate--CoA ligase [ADP-forming] subunit beta from Francisella tularensis subsp. mediasiatica (strain FSC147).